Here is a 439-residue protein sequence, read N- to C-terminus: tRNA-2-methylthio-N(6)-dimethylallyladenosine synthase (439 aa).

The region spanning 2–119 (KKLYLKTHGC…LPDLLDSVIQ (118 aa)) is the MTTase N-terminal domain. [4Fe-4S] cluster-binding residues include Cys-11, Cys-48, Cys-82, Cys-156, Cys-160, and Cys-163. Residues 142-374 (RAEGPSAFVS…QNRINAKAAE (233 aa)) enclose the Radical SAM core domain. The TRAM domain occupies 377–439 (QSMVGTQQRI…RPYSLWGEIC (63 aa)).

The protein belongs to the methylthiotransferase family. MiaB subfamily. As to quaternary structure, monomer. It depends on [4Fe-4S] cluster as a cofactor.

It localises to the cytoplasm. The enzyme catalyses N(6)-dimethylallyladenosine(37) in tRNA + (sulfur carrier)-SH + AH2 + 2 S-adenosyl-L-methionine = 2-methylsulfanyl-N(6)-dimethylallyladenosine(37) in tRNA + (sulfur carrier)-H + 5'-deoxyadenosine + L-methionine + A + S-adenosyl-L-homocysteine + 2 H(+). In terms of biological role, catalyzes the methylthiolation of N6-(dimethylallyl)adenosine (i(6)A), leading to the formation of 2-methylthio-N6-(dimethylallyl)adenosine (ms(2)i(6)A) at position 37 in tRNAs that read codons beginning with uridine. This chain is tRNA-2-methylthio-N(6)-dimethylallyladenosine synthase, found in Coxiella burnetii (strain CbuK_Q154) (Coxiella burnetii (strain Q154)).